Here is a 255-residue protein sequence, read N- to C-terminus: 5-oxoprolinase subunit A (255 aa).

It belongs to the LamB/PxpA family. As to quaternary structure, forms a complex composed of PxpA, PxpB and PxpC.

The enzyme catalyses 5-oxo-L-proline + ATP + 2 H2O = L-glutamate + ADP + phosphate + H(+). Functionally, catalyzes the cleavage of 5-oxoproline to form L-glutamate coupled to the hydrolysis of ATP to ADP and inorganic phosphate. The chain is 5-oxoprolinase subunit A from Rhodopseudomonas palustris (strain BisA53).